The primary structure comprises 426 residues: MLLSKYFLPVLKEEPSEAQVTSHKLMLRSGMIRQQAAGIYTWLPLGLKVLKNIENIVRLNMNKAGALEVLMPCIQPAHLWMESGRFDNYGKEMLKFQDRHDNTLLFGPTNEDMITDIFRHNIKSYKDLPKNLYHIQWKFRDEIRPRFGVMRGREFLMKDAYSFDINEENAVKTYNQMYKAYINAFRDLGVFAIPVIADNGPIGGNLSHEFHIIAETGESTIYYDKKFKTLKDNPDIDVEEIKSWYAAAEEKYEVNKLPISEQEITSSKGIEVGHIFYIGSKYSVNMNALINDEYGKLTPIEMSSYGIGISRLVAAIIEANCDEKGIIWPSSVAPFKVSLINLNIHDSKCVELAEMAYKELSDKNIEVLYDDTEARPGSKFATHDLIGSPHQIIIGPKKAANNIVALKDRKSGVIEDIEVGSLMSVL.

The protein belongs to the class-II aminoacyl-tRNA synthetase family. ProS type 2 subfamily. Homodimer.

The protein localises to the cytoplasm. The catalysed reaction is tRNA(Pro) + L-proline + ATP = L-prolyl-tRNA(Pro) + AMP + diphosphate. Functionally, catalyzes the attachment of proline to tRNA(Pro) in a two-step reaction: proline is first activated by ATP to form Pro-AMP and then transferred to the acceptor end of tRNA(Pro). In Rickettsia peacockii (strain Rustic), this protein is Proline--tRNA ligase.